The following is a 443-amino-acid chain: CBL-interacting protein kinase 29 (443 aa).

The 261-residue stretch at 32–292 (YELGGLLGRG…TEEIITHPWF (261 aa)) folds into the Protein kinase domain. Residues 38–46 (LGRGASAKV) and lysine 61 each bind ATP. Aspartate 164 functions as the Proton acceptor in the catalytic mechanism. Positions 182-207 (DFGLGAVADGALHHTLCGTPAYVAPE) are activation loop. Residues 313 to 347 (AKFKTEFKEDDMARDMTAFDILACSPGSDLSGLFG) form the NAF domain. A PPI region spans residues 350-379 (PGKERVFVGEPAAAVLSRVEEAGKKEGYMV).

This sequence belongs to the protein kinase superfamily. CAMK Ser/Thr protein kinase family. SNF1 subfamily. Requires Mn(2+) as cofactor.

The catalysed reaction is L-seryl-[protein] + ATP = O-phospho-L-seryl-[protein] + ADP + H(+). The enzyme catalyses L-threonyl-[protein] + ATP = O-phospho-L-threonyl-[protein] + ADP + H(+). Its function is as follows. CIPK serine-threonine protein kinases interact with CBL proteins. Binding of a CBL protein to the regulatory NAF domain of CIPK protein lead to the activation of the kinase in a calcium-dependent manner. The sequence is that of CBL-interacting protein kinase 29 (CIPK29) from Oryza sativa subsp. japonica (Rice).